The following is a 127-amino-acid chain: Large ribosomal subunit protein bL20 (127 aa).

This sequence belongs to the bacterial ribosomal protein bL20 family.

Functionally, binds directly to 23S ribosomal RNA and is necessary for the in vitro assembly process of the 50S ribosomal subunit. It is not involved in the protein synthesizing functions of that subunit. This chain is Large ribosomal subunit protein bL20, found in Renibacterium salmoninarum (strain ATCC 33209 / DSM 20767 / JCM 11484 / NBRC 15589 / NCIMB 2235).